A 153-amino-acid chain; its full sequence is MPNVTIARESPLQDAVVQLIEELDRYLGDLYPAESNHLLDLQTLAKPDIRFLVARRSGTVVGCGAIAIDTEGGYGEVKRMFVQPTARGGQIGRRLLERIEDEARAAGLSALLLETGVYQATRIALYRKQGFADRGPFGPYGPDPLSLFMEKPL.

Residues 4-153 (VTIARESPLQ…PLSLFMEKPL (150 aa)) form the N-acetyltransferase domain.

Participates in the tryptophan-dependent indole-3-acetic acid production, which is a phytohormone released by A.brasilense. In Azospirillum brasilense, this protein is IAA acetyltransferase.